Here is a 639-residue protein sequence, read N- to C-terminus: ATP-dependent zinc metalloprotease FtsH (639 aa).

At 1-4 the chain is on the cytoplasmic side; sequence MNST. Residues 5–25 form a helical membrane-spanning segment; the sequence is VKTIVFWVFILACCILLWQVF. Residues 26–104 lie on the Periplasmic side of the membrane; that stretch reads QRSSNTGKEQ…TVKDNSGSPW (79 aa). The helical transmembrane segment at 105–125 threads the bilayer; that stretch reads WSILIQFSPVLVLVALWFFMI. The Cytoplasmic portion of the chain corresponds to 126-639; sequence RQMQSGGNKA…GLPEGSPSPA (514 aa). 196-203 lines the ATP pocket; sequence GPPGTGKT. His418 contacts Zn(2+). Glu419 is an active-site residue. His422 and Asp494 together coordinate Zn(2+). The segment at 597-639 is disordered; the sequence is KDLPPLKPSGGSGTATTDDVQQVLKPSSDRGAGGLPEGSPSPA.

This sequence in the central section; belongs to the AAA ATPase family. The protein in the C-terminal section; belongs to the peptidase M41 family. In terms of assembly, homohexamer. Requires Zn(2+) as cofactor.

The protein resides in the cell inner membrane. In terms of biological role, acts as a processive, ATP-dependent zinc metallopeptidase for both cytoplasmic and membrane proteins. Plays a role in the quality control of integral membrane proteins. This is ATP-dependent zinc metalloprotease FtsH from Acidobacterium capsulatum (strain ATCC 51196 / DSM 11244 / BCRC 80197 / JCM 7670 / NBRC 15755 / NCIMB 13165 / 161).